The sequence spans 177 residues: MNMCTDGKKYHSTATSAAVGASAPGVPDARAIAAICEQLRQHVADLGVLYIKLHNYHWHIYGIEFKQVHELLEEYYVSVTEAFDTIAERLLQLGAQAPASMAEYLALSGIAEETEKEITIVSALARVKRDFEYLSTRFSQTQVLAAESGDAVTDGIITDILRTLGKAIWMLGATLKA.

It belongs to the Dps family. Homodecamer; either linked or stabilized by disulfide bonds.

Functionally, may play an important structural role in the outer membrane. This Treponema pallidum (strain Nichols) protein is Antigen TpF1 (tpf1).